Here is a 172-residue protein sequence, read N- to C-terminus: T-cell receptor gamma chain C region C7.5 (172 aa).

Residues 1–140 are c region; that stretch reads DKKLDADISP…QFTITSAYYT (140 aa). The helical transmembrane segment at 141 to 160 threads the bilayer; sequence YLLLLLKSVIYLAIISFSLL. Residues 161–172 are Cytoplasmic-facing; the sequence is RRTSVCCNEKKS.

Its subcellular location is the membrane. The sequence is that of T-cell receptor gamma chain C region C7.5 from Mus musculus (Mouse).